The chain runs to 110 residues: Large ribosomal subunit protein uL22 (110 aa).

The protein belongs to the universal ribosomal protein uL22 family. Part of the 50S ribosomal subunit.

Its function is as follows. This protein binds specifically to 23S rRNA; its binding is stimulated by other ribosomal proteins, e.g. L4, L17, and L20. It is important during the early stages of 50S assembly. It makes multiple contacts with different domains of the 23S rRNA in the assembled 50S subunit and ribosome. Functionally, the globular domain of the protein is located near the polypeptide exit tunnel on the outside of the subunit, while an extended beta-hairpin is found that lines the wall of the exit tunnel in the center of the 70S ribosome. In Nitrosococcus oceani (strain ATCC 19707 / BCRC 17464 / JCM 30415 / NCIMB 11848 / C-107), this protein is Large ribosomal subunit protein uL22.